A 162-amino-acid polypeptide reads, in one-letter code: MTEQLNTNQQNDEAQFMIQRIYIKDLSYETPNTPAVFQQQWEPELKLDLNTTTTQLDKNVYEVVLTVTATVMNQKTTAFLVEVKQAGIFTIQGAAASQLDHLLHSFCPSILFPYAREAITSQVIRGSFPQLVLAPINFDALYMQQLEEKQKATGAKDETVSH.

The protein belongs to the SecB family. Homotetramer, a dimer of dimers. One homotetramer interacts with 1 SecA dimer.

It localises to the cytoplasm. One of the proteins required for the normal export of preproteins out of the cell cytoplasm. It is a molecular chaperone that binds to a subset of precursor proteins, maintaining them in a translocation-competent state. It also specifically binds to its receptor SecA. This is Protein-export protein SecB from Legionella pneumophila subsp. pneumophila (strain Philadelphia 1 / ATCC 33152 / DSM 7513).